A 216-amino-acid polypeptide reads, in one-letter code: Pyrophosphatase PpaX (216 aa).

Asp9 functions as the Nucleophile in the catalytic mechanism.

Belongs to the HAD-like hydrolase superfamily. PpaX family. It depends on Mg(2+) as a cofactor.

It catalyses the reaction diphosphate + H2O = 2 phosphate + H(+). Its function is as follows. Hydrolyzes pyrophosphate formed during P-Ser-HPr dephosphorylation by HPrK/P. Might play a role in controlling the intracellular pyrophosphate pool. This Bacillus cereus (strain AH820) protein is Pyrophosphatase PpaX.